Consider the following 440-residue polypeptide: Serine protease inhibitor A3G (440 aa).

The segment at 357-382 (GTEAAAATGMAGVGCCAVFDFLEIFF) is RCL.

This sequence belongs to the serpin family. Expressed in bone marrow (particularly hematopoietic stem cells), heart, kidney, liver, lung, skeletal muscle, spleen, testis, thymus and T-cells.

The protein localises to the cytoplasm. The protein resides in the nucleus. Serine and cysteine protease inhibitor. Can inhibit lysosomal papain-like proteases including the cathepsins B, G, H, K, L and V. Ineffective against elastase, granzyme A, granzyme B, or caspases 3, 8 or 9. Inhibition of cytoplasmic cathepsin B following release from the lysosome may protect cells from apoptosis. This may facilitate the survival of progenitor T-cells and the subsequent development of long term memory CD8 T-cells. In Mus musculus (Mouse), this protein is Serine protease inhibitor A3G (Serpina3g).